The chain runs to 306 residues: 3-methyl-2-oxobutanoate hydroxymethyltransferase (306 aa).

Aspartate 53 and aspartate 96 together coordinate Mg(2+). 3-methyl-2-oxobutanoate-binding positions include 53-54 (DS), aspartate 96, and lysine 126. Glutamate 128 lines the Mg(2+) pocket. The active-site Proton acceptor is the glutamate 195.

Belongs to the PanB family. In terms of assembly, homodecamer; pentamer of dimers. Mg(2+) serves as cofactor.

Its subcellular location is the cytoplasm. It catalyses the reaction 3-methyl-2-oxobutanoate + (6R)-5,10-methylene-5,6,7,8-tetrahydrofolate + H2O = 2-dehydropantoate + (6S)-5,6,7,8-tetrahydrofolate. It functions in the pathway cofactor biosynthesis; (R)-pantothenate biosynthesis; (R)-pantoate from 3-methyl-2-oxobutanoate: step 1/2. Catalyzes the reversible reaction in which hydroxymethyl group from 5,10-methylenetetrahydrofolate is transferred onto alpha-ketoisovalerate to form ketopantoate. The sequence is that of 3-methyl-2-oxobutanoate hydroxymethyltransferase from Anaeromyxobacter sp. (strain K).